The sequence spans 261 residues: Phosphonates import ATP-binding protein PhnC (261 aa).

The region spanning 15 to 257 (LCLENTSAVY…LERSAIPPKR (243 aa)) is the ABC transporter domain. Position 48-55 (48-55 (GPSGSGKS)) interacts with ATP.

It belongs to the ABC transporter superfamily. Phosphonates importer (TC 3.A.1.9.1) family. The complex is composed of two ATP-binding proteins (PhnC), two transmembrane proteins (PhnE) and a solute-binding protein (PhnD).

It is found in the cell inner membrane. It catalyses the reaction phosphonate(out) + ATP + H2O = phosphonate(in) + ADP + phosphate + H(+). Its function is as follows. Part of the ABC transporter complex PhnCDE involved in phosphonates import. Responsible for energy coupling to the transport system. The protein is Phosphonates import ATP-binding protein PhnC of Hyphomonas neptunium (strain ATCC 15444).